A 445-amino-acid polypeptide reads, in one-letter code: Methionine aminopeptidase 2-1 (445 aa).

The disordered stretch occupies residues 1-99; sequence MAAQVPTEAL…FPNKAYPKGE (99 aa). Residues 61-75 show a composition bias toward basic residues; sequence KKKKKRKPKKKKKHP. Residue H198 participates in substrate binding. A divalent metal cation contacts are provided by D218, D229, and H298. H306 contributes to the substrate binding site. A divalent metal cation is bound by residues E331 and E426.

Belongs to the peptidase M24A family. Methionine aminopeptidase eukaryotic type 2 subfamily. It depends on Co(2+) as a cofactor. Zn(2+) serves as cofactor. Mn(2+) is required as a cofactor. The cofactor is Fe(2+).

The protein localises to the cytoplasm. The catalysed reaction is Release of N-terminal amino acids, preferentially methionine, from peptides and arylamides.. Cotranslationally removes the N-terminal methionine from nascent proteins. The N-terminal methionine is often cleaved when the second residue in the primary sequence is small and uncharged (Met-Ala-, Cys, Gly, Pro, Ser, Thr, or Val). This chain is Methionine aminopeptidase 2-1, found in Fusarium vanettenii (strain ATCC MYA-4622 / CBS 123669 / FGSC 9596 / NRRL 45880 / 77-13-4) (Fusarium solani subsp. pisi).